The sequence spans 390 residues: 1-deoxy-D-xylulose 5-phosphate reductoisomerase (390 aa).

NADPH-binding residues include T18, G19, S20, I21, and N130. A 1-deoxy-D-xylulose 5-phosphate-binding site is contributed by K131. E132 is a binding site for NADPH. Mn(2+) is bound at residue D156. Residues S157, E158, S182, and H205 each contribute to the 1-deoxy-D-xylulose 5-phosphate site. Residue E158 coordinates Mn(2+). G211 provides a ligand contact to NADPH. 1-deoxy-D-xylulose 5-phosphate-binding residues include S218, N223, K224, and E227. E227 contacts Mn(2+).

Belongs to the DXR family. It depends on Mg(2+) as a cofactor. The cofactor is Mn(2+).

The catalysed reaction is 2-C-methyl-D-erythritol 4-phosphate + NADP(+) = 1-deoxy-D-xylulose 5-phosphate + NADPH + H(+). Its pathway is isoprenoid biosynthesis; isopentenyl diphosphate biosynthesis via DXP pathway; isopentenyl diphosphate from 1-deoxy-D-xylulose 5-phosphate: step 1/6. Functionally, catalyzes the NADPH-dependent rearrangement and reduction of 1-deoxy-D-xylulose-5-phosphate (DXP) to 2-C-methyl-D-erythritol 4-phosphate (MEP). In Bacteroides thetaiotaomicron (strain ATCC 29148 / DSM 2079 / JCM 5827 / CCUG 10774 / NCTC 10582 / VPI-5482 / E50), this protein is 1-deoxy-D-xylulose 5-phosphate reductoisomerase.